The sequence spans 397 residues: RNA pseudouridine synthase 5 (397 aa).

Positions 64 to 114 constitute an S4 RNA-binding domain; that stretch reads APLPGWIKRIRDGQITVDGEVATDPDMILREGSKLVYHRLPWQEPFAPHLL.

This sequence belongs to the pseudouridine synthase RluA family.

It catalyses the reaction a uridine in RNA = a pseudouridine in RNA. This chain is RNA pseudouridine synthase 5, found in Oryza sativa subsp. japonica (Rice).